The primary structure comprises 922 residues: Isoleucine--tRNA ligase (922 aa).

Residues 57–67 (PYANGDIHLGH) carry the 'HIGH' region motif. Position 553 (E553) interacts with L-isoleucyl-5'-AMP. Positions 594–598 (KMSKS) match the 'KMSKS' region motif. Position 597 (K597) interacts with ATP. Positions 892, 895, 912, and 915 each coordinate Zn(2+).

This sequence belongs to the class-I aminoacyl-tRNA synthetase family. IleS type 1 subfamily. As to quaternary structure, monomer. Zn(2+) serves as cofactor.

The protein localises to the cytoplasm. The catalysed reaction is tRNA(Ile) + L-isoleucine + ATP = L-isoleucyl-tRNA(Ile) + AMP + diphosphate. In terms of biological role, catalyzes the attachment of isoleucine to tRNA(Ile). As IleRS can inadvertently accommodate and process structurally similar amino acids such as valine, to avoid such errors it has two additional distinct tRNA(Ile)-dependent editing activities. One activity is designated as 'pretransfer' editing and involves the hydrolysis of activated Val-AMP. The other activity is designated 'posttransfer' editing and involves deacylation of mischarged Val-tRNA(Ile). This Desulfitobacterium hafniense (strain DSM 10664 / DCB-2) protein is Isoleucine--tRNA ligase.